Here is a 224-residue protein sequence, read N- to C-terminus: Homeobox protein Hox-B6 (224 aa).

Residues 127 to 132 (VYPWMQ) carry the Antp-type hexapeptide motif. The homeobox DNA-binding region spans 146 to 205 (GRRGRQTYTRYQTLELEKEFHYNRYLTRRRRIEIAHALCLTERQIKIWFQNRRMKWKKES). At serine 214 the chain carries Phosphoserine.

This sequence belongs to the Antp homeobox family.

The protein resides in the nucleus. Sequence-specific transcription factor which is part of a developmental regulatory system that provides cells with specific positional identities on the anterior-posterior axis. The sequence is that of Homeobox protein Hox-B6 (Hoxb6) from Mus musculus (Mouse).